Consider the following 130-residue polypeptide: Small ribosomal subunit protein uS9 (130 aa).

The disordered stretch occupies residues 109 to 130; that stretch reads RMKERKKYGLKGARRAPQFSKR. Residues 111-130 are compositionally biased toward basic residues; it reads KERKKYGLKGARRAPQFSKR.

It belongs to the universal ribosomal protein uS9 family.

This chain is Small ribosomal subunit protein uS9, found in Alkaliphilus metalliredigens (strain QYMF).